Reading from the N-terminus, the 577-residue chain is Protein NRT1/ PTR FAMILY 6.2 (577 aa).

Transmembrane regions (helical) follow at residues 28–48 (WITA…TMGI), 74–94 (FMGT…SFLG), 96–116 (FKTI…LAVA), 134–154 (IPAT…IALG), 183–203 (FFFN…VTVL), 214–234 (WAYG…LCGT), 332–352 (LLPI…MITF), 369–389 (IPAG…LAVY), 409–429 (LQRI…AALV), 447–467 (ISVF…AFIY), 488–508 (GLFL…VSIV), and 535–555 (WLLV…ALWF).

It belongs to the major facilitator superfamily. Proton-dependent oligopeptide transporter (POT/PTR) (TC 2.A.17) family. In terms of tissue distribution, expressed in shoots, leaves, flowers and siliques. Expressed in leaf petiole.

It is found in the membrane. Functionally, low-affinity proton-dependent nitrate transporter. Not involved in dipeptides transport. This is Protein NRT1/ PTR FAMILY 6.2 (NPF6.2) from Arabidopsis thaliana (Mouse-ear cress).